Here is a 130-residue protein sequence, read N- to C-terminus: Metastasis-suppressor KiSS-1 (130 aa).

A signal peptide spans 1–19 (MISMASWQLLLLLCVATYG). Residues 49–82 (KESRYAESKPGSAGLRARRSSPCPPVEGPAGRQR) form a disordered region. Residues Cys-71 and Cys-85 are joined by a disulfide bond. Position 110 is a phosphotyrosine (Tyr-110). The segment at 110–119 (YNWNSFGLRY) is essential for receptor binding and receptor activation. Tyr-119 carries the tyrosine amide modification.

This sequence belongs to the KISS1 family. In terms of tissue distribution, weak in all tissue types with highest levels in lung and 15- 17-day embryos. Expressed in areas of the hypothalamus implicated in the neuroendocrine regulation of gonadotropin secretion, including the anteroventral periventricular nucleus, the periventricular nucleus, and the arcuate nucleus.

The protein localises to the secreted. Functionally, metastasis suppressor protein. May regulate events downstream of cell-matrix adhesion, perhaps involving cytoskeletal reorganization. Generates a C-terminally amidated peptide, metastin which functions as the endogenous ligand of the G-protein coupled receptor GPR54. Activation of the receptor inhibits cell proliferation and cell migration, key characteristics of tumor metastasis. The receptor is also essential for normal gonadotropin-released hormone physiology and for puberty. The hypothalamic KiSS1/GPR54 system is a pivotal factor in central regulation of the gonadotropic axis at puberty and in adulthood. Intracerebroventricular administration induces an increase in serum LH and FSH levels in prepubertal male and female as well as in adult animals. The protein is Metastasis-suppressor KiSS-1 (Kiss1) of Mus musculus (Mouse).